Here is a 90-residue protein sequence, read N- to C-terminus: Small ribosomal subunit protein bS20 (90 aa).

It belongs to the bacterial ribosomal protein bS20 family.

Its function is as follows. Binds directly to 16S ribosomal RNA. The protein is Small ribosomal subunit protein bS20 of Francisella philomiragia subsp. philomiragia (strain ATCC 25017 / CCUG 19701 / FSC 153 / O#319-036).